A 146-amino-acid chain; its full sequence is Late protein H7 (146 aa).

The chain crosses the membrane as a helical span at residues leucine 10 to phenylalanine 32.

It belongs to the chordopoxvirinae H7 family.

Its subcellular location is the membrane. Contributes to the formation of crescents and immature virions (IV). The sequence is that of Late protein H7 from Vaccinia virus (strain Tian Tan) (VACV).